Reading from the N-terminus, the 2524-residue chain is Neurogenic locus notch homolog protein 1 (2524 aa).

Residues Met-1 to Gly-19 form the signal peptide. EGF-like domains are found at residues Leu-20–Gln-57, Phe-58–Leu-99, Val-102–Gln-140, and Gln-141–Lys-177. The Extracellular portion of the chain corresponds to Leu-20–Tyr-1729. 33 disulfides stabilise this stretch: Cys-22–Cys-35, Cys-29–Cys-45, Cys-47–Cys-56, Cys-62–Cys-74, Cys-68–Cys-87, Cys-89–Cys-98, Cys-106–Cys-117, Cys-111–Cys-128, Cys-130–Cys-139, Cys-145–Cys-156, Cys-150–Cys-165, Cys-167–Cys-176, Cys-183–Cys-194, Cys-188–Cys-203, Cys-205–Cys-214, Cys-221–Cys-232, Cys-226–Cys-242, Cys-244–Cys-253, Cys-260–Cys-271, Cys-265–Cys-280, Cys-282–Cys-291, Cys-298–Cys-311, Cys-305–Cys-320, Cys-322–Cys-331, Cys-338–Cys-349, Cys-343–Cys-358, Cys-360–Cys-369, Cys-375–Cys-386, Cys-380–Cys-397, Cys-399–Cys-408, Cys-415–Cys-428, Cys-422–Cys-437, and Cys-439–Cys-448. Positions Asp-179–Asp-215 constitute an EGF-like 5; calcium-binding domain. The EGF-like 6 domain occupies Pro-217–Glu-254. Residue Thr-231 is glycosylated (O-linked (Fuc...) threonine; alternate). Thr-231 carries O-linked (GalNAc...) threonine; alternate glycosylation. Residues Asn-256–Thr-292 enclose the EGF-like 7; calcium-binding domain. Positions Asp-294–Ser-332 constitute an EGF-like 8; calcium-binding domain. The EGF-like 9; calcium-binding domain maps to Asn-334–His-370. Residues Leu-371 to Asn-409 enclose the EGF-like 10 domain. The EGF-like 11; calcium-binding domain maps to Asp-411 to Glu-449. Residues Thr-431 and Ser-434 each contribute to the Ca(2+) site. A glycan (O-linked (Glc...) serine) is linked at Ser-434. Residues Asp-451, Val-452, and Glu-454 each contribute to the Ca(2+) site. The EGF-like 12; calcium-binding domain maps to Asp-451–Glu-487. Disulfide bonds link Cys-455-Cys-466, Cys-460-Cys-475, and Cys-477-Cys-486. The O-linked (Glc...) serine glycan is linked to Ser-457. The N-linked (GlcNAc...) asparagine glycan is linked to Asn-462. Thr-465 carries O-linked (Fuc...) threonine glycosylation. Ca(2+) is bound by residues Asp-468 and Gln-469. Ca(2+)-binding residues include Asn-489, Ile-490, and Glu-492. Positions Asn-489 to Gln-525 constitute an EGF-like 13; calcium-binding domain. Cystine bridges form between Cys-493–Cys-504, Cys-498–Cys-513, Cys-515–Cys-524, Cys-531–Cys-542, Cys-536–Cys-551, Cys-553–Cys-562, Cys-569–Cys-579, Cys-574–Cys-588, Cys-590–Cys-599, Cys-606–Cys-617, Cys-611–Cys-626, Cys-628–Cys-637, Cys-644–Cys-654, Cys-649–Cys-663, Cys-665–Cys-674, Cys-681–Cys-692, Cys-686–Cys-701, Cys-703–Cys-712, Cys-719–Cys-729, Cys-724–Cys-738, Cys-740–Cys-749, Cys-756–Cys-767, Cys-761–Cys-776, Cys-778–Cys-787, Cys-794–Cys-805, Cys-799–Cys-814, Cys-816–Cys-825, Cys-832–Cys-843, Cys-837–Cys-854, Cys-856–Cys-865, Cys-872–Cys-883, Cys-877–Cys-892, Cys-894–Cys-903, Cys-910–Cys-921, Cys-915–Cys-930, Cys-932–Cys-941, Cys-948–Cys-959, Cys-953–Cys-968, Cys-970–Cys-979, Cys-986–Cys-997, Cys-991–Cys-1006, Cys-1008–Cys-1017, Cys-1024–Cys-1035, Cys-1029–Cys-1044, Cys-1046–Cys-1055, Cys-1062–Cys-1073, Cys-1067–Cys-1082, Cys-1084–Cys-1093, Cys-1100–Cys-1121, Cys-1115–Cys-1130, Cys-1132–Cys-1141, Cys-1148–Cys-1159, Cys-1153–Cys-1168, Cys-1170–Cys-1179, Cys-1186–Cys-1197, Cys-1191–Cys-1206, Cys-1208–Cys-1217, Cys-1224–Cys-1243, Cys-1237–Cys-1252, Cys-1254–Cys-1263, Cys-1270–Cys-1283, Cys-1275–Cys-1292, Cys-1294–Cys-1303, Cys-1310–Cys-1321, Cys-1315–Cys-1333, Cys-1335–Cys-1344, Cys-1351–Cys-1362, Cys-1356–Cys-1371, Cys-1373–Cys-1382, Cys-1390–Cys-1401, Cys-1395–Cys-1412, Cys-1414–Cys-1423, Cys-1447–Cys-1470, Cys-1452–Cys-1465, and Cys-1461–Cys-1477. O-linked (Glc...) serine glycosylation occurs at Ser-495. Ca(2+) contacts are provided by Asp-506 and Lys-507. In terms of domain architecture, EGF-like 14; calcium-binding spans Asp-527–Glu-563. The region spanning Asp-565–Asp-600 is the EGF-like 15; calcium-binding domain. The region spanning Asp-602–Glu-638 is the EGF-like 16; calcium-binding domain. The 36-residue stretch at Lys-640–Asn-675 folds into the EGF-like 17 domain. In terms of domain architecture, EGF-like 18; calcium-binding spans Asn-677–Leu-713. One can recognise an EGF-like 19; calcium-binding domain in the interval Glu-715–Asp-750. One can recognise an EGF-like 20; calcium-binding domain in the interval Asn-752–Gln-788. The EGF-like 21; calcium-binding domain maps to Asn-790–Glu-826. Residues Val-828–Glu-866 form the EGF-like 22 domain. In terms of domain architecture, EGF-like 23; calcium-binding spans Asp-868 to Glu-904. An N-linked (GlcNAc...) asparagine glycan is attached at Asn-887. Residues Asp-906–Glu-942 enclose the EGF-like 24; calcium-binding domain. Residues Asp-944–Glu-980 enclose the EGF-like 25; calcium-binding domain. Asn-958 is a glycosylation site (N-linked (GlcNAc...) asparagine). The EGF-like 26 domain maps to Asn-982 to Gln-1018. An EGF-like 27; calcium-binding domain is found at Asp-1020–Gln-1056. 2 EGF-like domains span residues Leu-1058–Asp-1094 and Pro-1096–Glu-1142. The 37-residue stretch at Gln-1144–Ser-1180 folds into the EGF-like 30; calcium-binding domain. Asn-1178 carries N-linked (GlcNAc...) asparagine glycosylation. Residues Glu-1182–Glu-1218 form the EGF-like 31; calcium-binding domain. Positions Asn-1220–Glu-1264 constitute an EGF-like 32; calcium-binding domain. EGF-like domains follow at residues Asp-1266–Glu-1304, Val-1306–Tyr-1346, Asp-1347–Gln-1383, and Val-1386–His-1424. O-linked (Fuc...) threonine; alternate glycosylation is present at Thr-1400. Thr-1400 is a glycosylation site (O-linked (GalNAc...) threonine; alternate). LNR repeat units follow at residues Cys-1447–Asn-1487, Cys-1488–Leu-1529, and Tyr-1530–Glu-1564. The N-linked (GlcNAc...) asparagine glycan is linked to Asn-1487. Disulfide bonds link Cys-1488/Cys-1512, Cys-1494/Cys-1507, Cys-1503/Cys-1519, Cys-1534/Cys-1547, and Cys-1543/Cys-1559. N-linked (GlcNAc...) asparagine glycosylation occurs at Asn-1508. N-linked (GlcNAc...) asparagine glycosylation occurs at Asn-1584. The chain crosses the membrane as a helical span at residues Pro-1730 to Val-1750. The Cytoplasmic segment spans residues Asn-1751–Lys-2524. 6 ANK repeats span residues Asp-1876–Asn-1919, Thr-1924–Val-1953, Met-1957–Ala-1987, Asp-1991–Ala-2020, Phe-2024–Met-2053, and Lys-2057–Ile-2086. Disordered regions lie at residues Asn-2144 to Leu-2230, Met-2369 to Ser-2407, and Leu-2451 to Lys-2524. Composition is skewed to polar residues over residues Gly-2180–Val-2192 and Asp-2208–Leu-2230. The span at Met-2369 to Ser-2394 shows a compositional bias: low complexity. Polar residues-rich tracts occupy residues Thr-2395–Ser-2407 and Leu-2451–Leu-2471. Low complexity predominate over residues Pro-2481–Ser-2496. Polar residues predominate over residues Asn-2497–Arg-2516.

This sequence belongs to the NOTCH family. Forms a ternary complex with nrarp and rbpj/suh. Post-translationally, O-glycosylated on the EGF-like domains. Contains both O-linked fucose and O-linked glucose. O-linked glycosylation by galnt11 is involved in determination of left/right symmetry: glycosylation promotes activation of notch1, possibly by promoting cleavage by adam17, modulating the balance between motile and immotile (sensory) cilia at the left-right organiser (LRO). Synthesized in the endoplasmic reticulum as an inactive form which is proteolytically cleaved by a furin-like convertase in the trans-Golgi network before it reaches the plasma membrane to yield an active, ligand-accessible form. Cleavage results in a C-terminal fragment N(TM) and a N-terminal fragment N(EC). Following ligand binding, it is cleaved by adam17 to yield a membrane-associated intermediate fragment called notch extracellular truncation (NEXT). Following endocytosis, this fragment is then cleaved by presenilin dependent gamma-secretase to release a Notch-derived peptide containing the intracellular domain (NICD) from the membrane.

The protein resides in the cell membrane. It localises to the nucleus. Functionally, functions as a receptor for membrane-bound ligands Jagged-1 (JAG1), Jagged-2 (JAG2) and Delta-1 (DLL1) to regulate cell-fate determination. Upon ligand activation through the released notch intracellular domain (NICD) it forms a transcriptional activator complex with RBPJ/RBPSUH and activates genes of the enhancer of split locus. Affects the implementation of differentiation, proliferation and apoptotic programs. Involved in angiogenesis; negatively regulates endothelial cell proliferation and migration and angiogenic sprouting. Involved in the maturation of both CD4(+) and CD8(+) cells in the thymus. Important for follicular differentiation and possibly cell fate selection within the follicle. During cerebellar development, functions as a receptor for neuronal DNER and is involved in the differentiation of Bergmann glia. Represses neuronal and myogenic differentiation. May play an essential role in postimplantation development, probably in some aspect of cell specification and/or differentiation. May be involved in mesoderm development, somite formation and neurogenesis. Involved in determination of left/right symmetry by modulating the balance between motile and immotile (sensory) cilia at the left-right organiser (LRO). The sequence is that of Neurogenic locus notch homolog protein 1 (notch1) from Xenopus laevis (African clawed frog).